Here is a 250-residue protein sequence, read N- to C-terminus: Probable transcriptional regulatory protein Plut_1643 (250 aa).

This sequence belongs to the TACO1 family.

It is found in the cytoplasm. The polypeptide is Probable transcriptional regulatory protein Plut_1643 (Chlorobium luteolum (strain DSM 273 / BCRC 81028 / 2530) (Pelodictyon luteolum)).